A 78-amino-acid polypeptide reads, in one-letter code: High temperature lethal protein 1 (78 aa).

Serine 2 bears the N-acetylserine mark.

Interacts directly with RSC8. Component of the two forms of the RSC complex composed of at least either RSC1 or RSC2, and ARP7, ARP9, LDB7, NPL6, RSC3, RSC30, RSC4, RSC58, RSC6, RSC8, RSC9, SFH1, STH1, HTL1 and probably RTT102. The complexes interact with histone and histone variant components of centromeric chromatin. Component of a fungal-specific module (HTL1-LDB7-NPL6-RSC3-RSC30) within the RSC complex.

The protein resides in the nucleus. Its function is as follows. Required for cell cycle progression through G2/M transition at temperatures higher than 33 degrees Celsius. Component of the chromatin structure-remodeling complex (RSC), which is involved in transcription regulation and nucleosome positioning. RSC is responsible for the transfer of a histone octamer from a nucleosome core particle to naked DNA. The reaction requires ATP and involves an activated RSC-nucleosome intermediate. Remodeling reaction also involves DNA translocation, DNA twist and conformational change. As a reconfigurer of centromeric and flanking nucleosomes, RSC complex is required both for proper kinetochore function in chromosome segregation and, via a PKC1-dependent signaling pathway, for organization of the cellular cytoskeleton. When associated with the RSC complex, may act coordinately with PKC1 to regulate G2/M transition. Together with LDB7, NPL6, RSC3, RSC30 components, defines a fungal-specific module within the RSC complex that plays a role in many cellular functions including the maintenance of cell wall integrity. The protein is High temperature lethal protein 1 (HTL1) of Saccharomyces cerevisiae (strain ATCC 204508 / S288c) (Baker's yeast).